We begin with the raw amino-acid sequence, 155 residues long: Putative ATP synthase protein YMF19-like protein (155 aa).

The next 3 membrane-spanning stretches (helical) occupy residues 23-43 (FLWL…VLVF), 89-109 (WRAL…LGSF), and 117-137 (VDFG…LFFF).

This sequence belongs to the ATPase protein YMF19 family.

The protein localises to the mitochondrion membrane. The chain is Putative ATP synthase protein YMF19-like protein (YMF18) from Marchantia polymorpha (Common liverwort).